Consider the following 1230-residue polypeptide: Myosin-1 (1230 aa).

The segment at 1-32 (MGISRRPKADKNASAADSAPGGKPNIQKAQFD) is disordered. A Myosin motor domain is found at 39–713 (VGVSDLTLIS…TLFALEHMRD (675 aa)). 132-139 (GESGAGKT) is an ATP binding site. The tract at residues 403 to 485 (SIGILDIYGF…PGVFSAMKDA (83 aa)) is actin-binding. IQ domains follow at residues 717–737 (HNMA…RIEA) and 738–763 (ATRI…KGHQ). The TH1 domain occupies 771-961 (RRRYSLLGSR…TIHTQAGEPP (191 aa)). Disordered stretches follow at residues 945-1018 (QDHY…AARP), 1033-1065 (TRNT…PVSK), and 1116-1230 (AYLE…EDDW). Polar residues predominate over residues 1033–1045 (TRNTSVQSTQSTR). 2 stretches are compositionally biased toward pro residues: residues 1047-1062 (VPPP…PPAP) and 1122-1142 (TPPP…PGPP). The region spanning 1064-1123 (SKEPQYRVLYEFAGQSANEFSLKQGEIVTVLQKETNGWWLTKNVRGQGWAPTAYLEEVTP) is the SH3 domain. Residues 1179 to 1214 (RDSGMSISSNGSGNNSGRSTPTPSLAGGLAEALRAR) are compositionally biased toward low complexity.

The protein belongs to the TRAFAC class myosin-kinesin ATPase superfamily. Myosin family.

It is found in the cytoplasm. The protein localises to the cytoskeleton. Its subcellular location is the actin patch. Type-I myosin implicated in the organization of the actin cytoskeleton. Required for proper actin cytoskeleton polarization. At the cell cortex, assembles in patch-like structures together with proteins from the actin-polymerizing machinery and promotes actin assembly. Functions as actin nucleation-promoting factor (NPF) for the Arp2/3 complex. The chain is Myosin-1 (myoA) from Sclerotinia sclerotiorum (strain ATCC 18683 / 1980 / Ss-1) (White mold).